The primary structure comprises 542 residues: Chaperonin GroEL (542 aa).

Residues 29–32, 86–90, Gly413, 476–478, and Asp492 each bind ATP; these read TLGP, DGTTT, and NAA.

Belongs to the chaperonin (HSP60) family. As to quaternary structure, forms a cylinder of 14 subunits composed of two heptameric rings stacked back-to-back. Interacts with the co-chaperonin GroES.

It localises to the cytoplasm. It carries out the reaction ATP + H2O + a folded polypeptide = ADP + phosphate + an unfolded polypeptide.. Functionally, together with its co-chaperonin GroES, plays an essential role in assisting protein folding. The GroEL-GroES system forms a nano-cage that allows encapsulation of the non-native substrate proteins and provides a physical environment optimized to promote and accelerate protein folding. This Listeria welshimeri serovar 6b (strain ATCC 35897 / DSM 20650 / CCUG 15529 / CIP 8149 / NCTC 11857 / SLCC 5334 / V8) protein is Chaperonin GroEL.